The following is a 348-amino-acid chain: L-asparaginase 2 (348 aa).

A signal peptide spans 1–22; it reads MEFFKKTALAALVMGFSGAALA. The Asparaginase/glutaminase domain occupies 24–348; that stretch reads PNITILATGG…QQIQQIFNQY (325 aa). Threonine 34 functions as the O-isoaspartyl threonine intermediate in the catalytic mechanism. Substrate-binding positions include 80–81 and 111–112; these read SQ and TD. A disulfide bridge links cysteine 99 with cysteine 127.

Belongs to the asparaginase 1 family. In terms of assembly, homotetramer.

It is found in the periplasm. The enzyme catalyses L-asparagine + H2O = L-aspartate + NH4(+). The sequence is that of L-asparaginase 2 (ansB) from Escherichia coli (strain K12).